The chain runs to 341 residues: Adenylosuccinate synthetase (341 aa).

Residues 12-18 and 42-44 contribute to the GTP site; these read GDEGKGK and GHS. The Proton acceptor role is filled by Asp13. Residues Asp13 and Gly42 each contribute to the Mg(2+) site. Residues 13–16, 40–43, Thr127, Arg141, Gln179, Thr194, and Arg256 each bind IMP; these read DEGK and NAGH. His43 (proton donor) is an active-site residue. 252-258 provides a ligand contact to substrate; the sequence is VVTGRKR. GTP is bound by residues Arg258, 284-286, and 324-326; these read CID and STG.

Belongs to the adenylosuccinate synthetase family. As to quaternary structure, homodimer. Mg(2+) is required as a cofactor.

It is found in the cytoplasm. The enzyme catalyses IMP + L-aspartate + GTP = N(6)-(1,2-dicarboxyethyl)-AMP + GDP + phosphate + 2 H(+). It functions in the pathway purine metabolism; AMP biosynthesis via de novo pathway; AMP from IMP: step 1/2. In terms of biological role, plays an important role in the de novo pathway of purine nucleotide biosynthesis. Catalyzes the first committed step in the biosynthesis of AMP from IMP. The sequence is that of Adenylosuccinate synthetase from Methanosphaera stadtmanae (strain ATCC 43021 / DSM 3091 / JCM 11832 / MCB-3).